Here is a 111-residue protein sequence, read N- to C-terminus: uncharacterized protein (111 aa).

The chain crosses the membrane as a helical span at residues 81-101; the sequence is YFFLLFYVSFPHIFLGLFFFI.

The protein resides in the membrane. This is an uncharacterized protein from Schizosaccharomyces pombe (strain 972 / ATCC 24843) (Fission yeast).